A 267-amino-acid chain; its full sequence is Thymidylate synthase (267 aa).

Residue R25 coordinates dUMP. H55 is a (6R)-5,10-methylene-5,6,7,8-tetrahydrofolate binding site. Residue 130 to 131 (RR) coordinates dUMP. Residue C150 is the Nucleophile of the active site. DUMP contacts are provided by residues 170 to 173 (RSAD), N181, and 211 to 213 (HIY). D173 lines the (6R)-5,10-methylene-5,6,7,8-tetrahydrofolate pocket. A266 serves as a coordination point for (6R)-5,10-methylene-5,6,7,8-tetrahydrofolate.

Belongs to the thymidylate synthase family. Bacterial-type ThyA subfamily. As to quaternary structure, homodimer.

The protein resides in the cytoplasm. It carries out the reaction dUMP + (6R)-5,10-methylene-5,6,7,8-tetrahydrofolate = 7,8-dihydrofolate + dTMP. The protein operates within pyrimidine metabolism; dTTP biosynthesis. Catalyzes the reductive methylation of 2'-deoxyuridine-5'-monophosphate (dUMP) to 2'-deoxythymidine-5'-monophosphate (dTMP) while utilizing 5,10-methylenetetrahydrofolate (mTHF) as the methyl donor and reductant in the reaction, yielding dihydrofolate (DHF) as a by-product. This enzymatic reaction provides an intracellular de novo source of dTMP, an essential precursor for DNA biosynthesis. This chain is Thymidylate synthase, found in Corynebacterium efficiens (strain DSM 44549 / YS-314 / AJ 12310 / JCM 11189 / NBRC 100395).